The sequence spans 343 residues: Putative mediator of RNA polymerase II transcription subunit 4 (343 aa).

Residues 86–125 are a coiled coil; the sequence is LKKLEKHQKIQKEITEIQKEIEEKDKLISTLALNLKDIES. The disordered stretch occupies residues 247 to 343; the sequence is ISSPFSIGGN…DEESEEVEWD (97 aa). The segment covering 271-316 has biased composition (low complexity); sequence QQQQQQQQQPQQQLSQSQQSQQQTESELQPIQSILQPPQQLNIDLD. Over residues 317 to 343 the composition is skewed to acidic residues; sequence LNPDLDSSGDDDDEDDDDEESEEVEWD.

It belongs to the Mediator complex subunit 4 family. As to quaternary structure, component of the Mediator complex.

It is found in the nucleus. In terms of biological role, component of the Mediator complex, a coactivator involved in the regulated transcription of nearly all RNA polymerase II-dependent genes. Mediator functions as a bridge to convey information from gene-specific regulatory proteins to the basal RNA polymerase II transcription machinery. Mediator is recruited to promoters by direct interactions with regulatory proteins and serves as a scaffold for the assembly of a functional preinitiation complex with RNA polymerase II and the general transcription factors. This chain is Putative mediator of RNA polymerase II transcription subunit 4 (med4), found in Dictyostelium discoideum (Social amoeba).